The following is a 228-amino-acid chain: Leucine rich adaptor protein 1-like (228 aa).

An N-acetylmethionine modification is found at M1. The disordered stretch occupies residues 1 to 89; that stretch reads MEDSPLPDLR…GSPRGSHSSA (89 aa). Composition is skewed to basic and acidic residues over residues 8 to 21 and 28 to 42; these read DLRDIELKLGRKVP and LRGEEPVPRERDRDP. Positions 44–56 are enriched in gly residues; sequence GGSGGGGGGGGGC. The span at 57–88 shows a compositional bias: low complexity; sequence SSSSSYCSFPPSLSSSSSSSPTSGSPRGSHSS.

The chain is Leucine rich adaptor protein 1-like (LURAP1L) from Homo sapiens (Human).